A 244-amino-acid chain; its full sequence is Probable transcriptional regulatory protein TT_C0469 (244 aa).

The protein belongs to the TACO1 family.

The protein localises to the cytoplasm. This is Probable transcriptional regulatory protein TT_C0469 from Thermus thermophilus (strain ATCC BAA-163 / DSM 7039 / HB27).